The primary structure comprises 378 residues: Peptide chain release factor RF2 (378 aa).

Residue Gln-253 is modified to N5-methylglutamine.

This sequence belongs to the prokaryotic/mitochondrial release factor family. As to quaternary structure, interacts with the ribosome. Interacts with ribosomal protein L11. Recruited to stalled E.coli ribosomes by E.coli ArfA.

The protein localises to the cytoplasm. Functionally, peptide chain release factor 2 directs the termination of translation in response to the peptide chain termination codons UGA and UAA. In endogenous ribosomes interacts with P-site tRNA and 23S rRNA. In the presence of truncated mRNA in the 70S ribosome, ArfA and RF2 interact such that the GGQ peptide hydrolysis motif of RF2 rises into the peptidyl-transferase center and releases the ribosome. Recruited to stalled E.coli 70S ribosomes by E.coli ArfA, but cannot be functionally accomodated in the peptidyl-transferase center. Note T.thermophilus probably does not encode arfA. The sequence is that of Peptide chain release factor RF2 (prfB) from Thermus thermophilus (strain ATCC 27634 / DSM 579 / HB8).